A 277-amino-acid polypeptide reads, in one-letter code: Probable septum site-determining protein MinC (277 aa).

Residues threonine 107–aspartate 168 form a disordered region. Positions glycine 122–alanine 142 are enriched in basic and acidic residues.

It belongs to the MinC family. In terms of assembly, interacts with MinD and FtsZ.

In terms of biological role, cell division inhibitor that blocks the formation of polar Z ring septums. Rapidly oscillates between the poles of the cell to destabilize FtsZ filaments that have formed before they mature into polar Z rings. Prevents FtsZ polymerization. In Mesorhizobium japonicum (strain LMG 29417 / CECT 9101 / MAFF 303099) (Mesorhizobium loti (strain MAFF 303099)), this protein is Probable septum site-determining protein MinC.